A 340-amino-acid chain; its full sequence is 3-hydroxybenzoate synthase (340 aa).

Residues Tyr-147, Arg-154, Tyr-207, and Arg-220 each contribute to the substrate site. Catalysis depends on Glu-334, which acts as the Proton acceptor.

The protein belongs to the FkbO/Hyg5 family. Trimer.

It catalyses the reaction chorismate = 3-hydroxybenzoate + pyruvate. Functionally, involved in the biosynthesis of BC325, a rapamycin analog containing a 3-hydroxybenzoate starter unit. Catalyzes the hydrolysis of chorismate via an intramolecular mechanism to yield 3-hydroxybenzoate (3HBA). The sequence is that of 3-hydroxybenzoate synthase from Streptomyces hygroscopicus.